A 280-amino-acid chain; its full sequence is Acyl-[acyl-carrier-protein]--UDP-N-acetylglucosamine O-acyltransferase (280 aa).

The protein belongs to the transferase hexapeptide repeat family. LpxA subfamily. In terms of assembly, homotrimer.

The protein localises to the cytoplasm. It catalyses the reaction a (3R)-hydroxyacyl-[ACP] + UDP-N-acetyl-alpha-D-glucosamine = a UDP-3-O-[(3R)-3-hydroxyacyl]-N-acetyl-alpha-D-glucosamine + holo-[ACP]. Its pathway is glycolipid biosynthesis; lipid IV(A) biosynthesis; lipid IV(A) from (3R)-3-hydroxytetradecanoyl-[acyl-carrier-protein] and UDP-N-acetyl-alpha-D-glucosamine: step 1/6. Functionally, involved in the biosynthesis of lipid A, a phosphorylated glycolipid that anchors the lipopolysaccharide to the outer membrane of the cell. The polypeptide is Acyl-[acyl-carrier-protein]--UDP-N-acetylglucosamine O-acyltransferase (Chlamydia trachomatis serovar L2 (strain ATCC VR-902B / DSM 19102 / 434/Bu)).